We begin with the raw amino-acid sequence, 988 residues long: Ubiquitin carboxyl-terminal hydrolase 36 (988 aa).

The segment at 16-55 (PTLRTDNNGARKQAEHPNNQSHHNHPHPTSNPNELPKPKR) is disordered. A compositionally biased stretch (low complexity) spans 31 to 48 (HPNNQSHHNHPHPTSNPN). The region spanning 78 to 386 (TGMINVGNTC…NAYIMFFELD (309 aa)) is the USP domain. The active-site Nucleophile is the Cys-87. His-345 serves as the catalytic Proton acceptor. Disordered regions lie at residues 393-422 (PPAN…SPSP), 483-782 (ATSA…VTSN), and 868-988 (EQRQ…QQQT). Low complexity-rich tracts occupy residues 408–422 (STTP…SPSP) and 490–509 (NGNK…KSIN). A phosphoserine mark is found at Ser-419 and Ser-421. Polar residues predominate over residues 532-544 (TTAQLPSMPNMTE). Phosphothreonine occurs at positions 561 and 565. 2 positions are modified to phosphoserine: Ser-575 and Ser-577. Acidic residues predominate over residues 592–601 (EGEDFSESDQ). The span at 602–631 (ESGQTNGHSKTNGSLTNGSASSSVHVNNSK) shows a compositional bias: polar residues. Over residues 632 to 649 (QKTDAIDEIFKSLKKSAD) the composition is skewed to basic and acidic residues. Phosphoserine is present on Ser-650. Residues 650 to 659 (SEEDDDEEEP) are compositionally biased toward acidic residues. Residues 669-679 (PQKQSQSQSKA) show a composition bias toward low complexity. The segment covering 680 to 689 (PPSPKTPPSP) has biased composition (pro residues). A Phosphoserine modification is found at Ser-682. Residue Thr-685 is modified to Phosphothreonine. Phosphoserine is present on Ser-688. Over residues 707 to 717 (VDAIDDDDDAV) the composition is skewed to acidic residues. The residue at position 728 (Thr-728) is a Phosphothreonine. Polar residues predominate over residues 735–747 (NPFSSSKPSTDSP). Ser-746 bears the Phosphoserine mark. Thr-749 is subject to Phosphothreonine. A compositionally biased stretch (polar residues) spans 762–782 (ALKSHQQPRVGNGYQSNVTSN). Composition is skewed to low complexity over residues 892 to 903 (SGSAKGNNASNS) and 930 to 943 (RFHN…FQQR).

The protein belongs to the peptidase C19 family. As to quaternary structure, interacts with atms/PAF1, but not with CycT.

It localises to the nucleus. The protein resides in the nucleolus. It catalyses the reaction Thiol-dependent hydrolysis of ester, thioester, amide, peptide and isopeptide bonds formed by the C-terminal Gly of ubiquitin (a 76-residue protein attached to proteins as an intracellular targeting signal).. Functionally, required for maintaining multiple types of adult stem cells, including male and female germline, epithelial follicle cell and intestinal stem cells. May function as a transcriptional repressor by continually deubiquiting histone H2B at the promoters of genes critical for cellular differentiation, thereby preventing histone H3 'Lys-4' trimethylation (H3K4). Controls selective autophagy activation by ubiquitinated proteins. This is Ubiquitin carboxyl-terminal hydrolase 36 (Usp36) from Drosophila simulans (Fruit fly).